Consider the following 458-residue polypeptide: Argininosuccinate lyase (458 aa).

Belongs to the lyase 1 family. Argininosuccinate lyase subfamily.

The protein resides in the cytoplasm. It carries out the reaction 2-(N(omega)-L-arginino)succinate = fumarate + L-arginine. It participates in amino-acid biosynthesis; L-arginine biosynthesis; L-arginine from L-ornithine and carbamoyl phosphate: step 3/3. This Salmonella paratyphi A (strain ATCC 9150 / SARB42) protein is Argininosuccinate lyase.